A 1111-amino-acid chain; its full sequence is Cell death abnormality protein 1 (1111 aa).

The signal sequence occupies residues 1 to 18 (MRLILLVLLATWQVVVDT). At 19-910 (RAPTFPDKLT…NGAGRSTGLT (892 aa)) the chain is on the extracellular side. In terms of domain architecture, EMI spans 41–113 (GDHVCTVKTI…QCCDGYYQTK (73 aa)). 15 disulfide bridges follow: C45–C106, C71–C80, C105–C117, C121–C130, C125–C136, C138–C147, C160–C172, C166–C179, C181–C190, C203–C215, C209–C221, C223–C232, C245–C257, C251–C264, and C266–C275. An N-linked (GlcNAc...) asparagine glycan is attached at N66. 4 consecutive EGF-like domains span residues 118–148 (LPDC…KYCA), 156–191 (WGLG…ERCE), 199–233 (WGPN…EFCL), and 241–276 (FGAE…ALCE). N333 and N345 each carry an N-linked (GlcNAc...) asparagine glycan. An EGF-like 5 domain is found at 421 to 458 (YGPNCEKQAMCDWNHASECNPETGSCVCKPGRTGKNCS). Cystine bridges form between C425–C439, C431–C446, and C448–C457. Residue N456 is glycosylated (N-linked (GlcNAc...) asparagine). The stretch at 629-680 (DQKCDPNTFGFLCQETVTPSPCASTDPKNGVCLSCPPGSSGIHCEHNCPAGS) is one FU repeat. The EGF-like 6 domain occupies 681–716 (YGDGCQQVCSCADGHGCDPTTGECICEPGYHGKTCS). 3 disulfides stabilise this stretch: C685-C697, C691-C704, and C706-C715. The chain crosses the membrane as a helical span at residues 911-931 (WFFVLLIVALCGGLGLIALFY). An interaction with trim-21 region spans residues 931–1007 (YRNKYQKEKD…EEELENKKIH (77 aa)). The Cytoplasmic segment spans residues 932-1111 (RNKYQKEKDP…KKRAQDNLYT (180 aa)). 2 disordered regions span residues 940–993 (DPDM…PNGL) and 1006–1111 (IHGR…NLYT). The short motif at 962–965 (NPLY) is the NPXY element. The segment covering 963–980 (PLYSRQSVFPDSDAFSSE) has biased composition (polar residues). Y1019 is modified (phosphotyrosine; by SRC). A YXXL motif is present at residues 1019 to 1022 (YASL). Residues 1030-1039 (SSSSASASAS) show a composition bias toward low complexity. Over residues 1068-1083 (NSISPAHAVTTSNHNE) the composition is skewed to polar residues.

In terms of assembly, interacts (via C-terminus) with ced-6 (via PTB domain). Interacts with nck-1; the interaction is required for ced-1 degradation through the proteasome pathway. Interacts with V-ATPase vha-10. In terms of processing, phosphorylation of Tyr-1019, within the YXXL motif, by src-1 is thought to initiate phagosomal formation. 'Lys-48'-linked polyubiquitination by trim-21 leads to proteasomal degradation. In terms of tissue distribution, expressed in engulfing cells and syncytium hypodermal cells. Ced-7 is necessary for clustering around cell corpses prior to engulfment.

The protein localises to the cell membrane. It localises to the cytoplasmic vesicle. It is found in the phagosome membrane. In terms of biological role, involved in programmed cell death, also called apoptosis, in both somatic and germ cells. Acts by recruiting ced-6 to phagosomes which enables actin-dependent cytoskeletal reorganization and subsequent engulfment of the apoptotic cell corpse. Has a role in the association of ppk-3 and rab-7 with the phagosomal surface which is necessary for the incorporation of lysosomes to phagosomes during phagosome maturation. Activates the expression of unfolded protein response genes, which are involved in the immune response to live bacteria. The chain is Cell death abnormality protein 1 from Caenorhabditis elegans.